A 313-amino-acid chain; its full sequence is Small glutamine-rich tetratricopeptide repeat-containing protein alpha (313 aa).

The tract at residues 69–97 (KELPPDLRSPQETPPSEEDSAEAERLKTE) is disordered. Ser-77 is modified (phosphoserine). A Phosphothreonine modification is found at Thr-81. Phosphoserine is present on Ser-84. TPR repeat units lie at residues 91 to 124 (AERL…NPAN), 125 to 158 (AVYF…DPSY), and 159 to 192 (SKAY…DPDN). Position 137 is an N6-acetyllysine (Lys-137). Ser-301 is modified (phosphoserine). The residue at position 303 (Thr-303) is a Phosphothreonine. Ser-305 bears the Phosphoserine mark.

This sequence belongs to the SGT family. As to quaternary structure, homodimer. Homooligomer. Interacts with DNAJC5 and DNAJC5B. Interacts (via TPR repeats) with HSP90AA1. Interacts (via Gln-rich region) with SLC2A1. Interacts with HSP90AB1. Interacts (via TPR repeats) with HSPA8/Hsc70; the interaction is direct. Interacts with BAG6 (via ubiquitin-like domain); interaction prevents interaction between BAG6 and RNF126. Forms a multiprotein complex, at least composed of DNAJB12, DNAJB14, HSPA8/Hsc70 and SGTA; interaction with DNAJB14 and HSPA8/Hsc70 is direct.

The protein localises to the cytoplasm. It is found in the nucleus. Its function is as follows. Co-chaperone that binds misfolded and hydrophobic patches-containing client proteins in the cytosol. Mediates their targeting to the endoplasmic reticulum but also regulates their sorting to the proteasome when targeting fails. Functions in tail-anchored/type II transmembrane proteins membrane insertion constituting with ASNA1 and the BAG6 complex a targeting module. Functions upstream of the BAG6 complex and ASNA1, binding more rapidly the transmembrane domain of newly synthesized proteins. It is also involved in the regulation of the endoplasmic reticulum-associated misfolded protein catabolic process via its interaction with BAG6: collaborates with the BAG6 complex to maintain hydrophobic substrates in non-ubiquitinated states. Competes with RNF126 for interaction with BAG6, preventing the ubiquitination of client proteins associated with the BAG6 complex. Binds directly to HSC70 and HSP70 and regulates their ATPase activity. The protein is Small glutamine-rich tetratricopeptide repeat-containing protein alpha (SGTA) of Bos taurus (Bovine).